Here is a 182-residue protein sequence, read N- to C-terminus: Glycerol-3-phosphate acyltransferase 1 (182 aa).

A run of 5 helical transmembrane segments spans residues 5–25 (MQFL…AYIV), 54–74 (GYFV…VSIA), 81–101 (STFL…PILF), 117–137 (IAFD…FYLI), and 157–177 (ILYS…VLIL).

It belongs to the PlsY family. As to quaternary structure, probably interacts with PlsX.

It is found in the cell membrane. The catalysed reaction is an acyl phosphate + sn-glycerol 3-phosphate = a 1-acyl-sn-glycero-3-phosphate + phosphate. The protein operates within lipid metabolism; phospholipid metabolism. Its function is as follows. Catalyzes the transfer of an acyl group from acyl-phosphate (acyl-PO(4)) to glycerol-3-phosphate (G3P) to form lysophosphatidic acid (LPA). This enzyme utilizes acyl-phosphate as fatty acyl donor, but not acyl-CoA or acyl-ACP. In Bacillus thuringiensis subsp. konkukian (strain 97-27), this protein is Glycerol-3-phosphate acyltransferase 1.